The primary structure comprises 267 residues: Undecaprenyl-diphosphatase (267 aa).

The next 8 membrane-spanning stretches (helical) occupy residues 1-21 (MSYFEAFVLALIQGLTEFLPI), 39-59 (QGLAFDVAVHVGTLAAVVIYF), 83-103 (AKLAWMIVIATIPACIFGLVM), 111-131 (LRSAYVIATTTIIFGLLLWWV), 144-164 (AGWKKALFIGIAQALAMIPGT), 189-209 (FLMSIPIITLAGSYLGLKLVT), 218-238 (FLLTGIVTSFISAYLCIHLFL), and 246-266 (MTPFVIYRLILGVGLFAYLLM).

It belongs to the UppP family.

It localises to the cell inner membrane. The enzyme catalyses di-trans,octa-cis-undecaprenyl diphosphate + H2O = di-trans,octa-cis-undecaprenyl phosphate + phosphate + H(+). Its function is as follows. Catalyzes the dephosphorylation of undecaprenyl diphosphate (UPP). Confers resistance to bacitracin. The sequence is that of Undecaprenyl-diphosphatase from Vibrio vulnificus (strain CMCP6).